The sequence spans 248 residues: Ribonuclease PH (248 aa).

Phosphate-binding positions include Arg-86 and 124 to 126 (GTR).

The protein belongs to the RNase PH family. As to quaternary structure, homohexameric ring arranged as a trimer of dimers.

It catalyses the reaction tRNA(n+1) + phosphate = tRNA(n) + a ribonucleoside 5'-diphosphate. Phosphorolytic 3'-5' exoribonuclease that plays an important role in tRNA 3'-end maturation. Removes nucleotide residues following the 3'-CCA terminus of tRNAs; can also add nucleotides to the ends of RNA molecules by using nucleoside diphosphates as substrates, but this may not be physiologically important. Probably plays a role in initiation of 16S rRNA degradation (leading to ribosome degradation) during starvation. The sequence is that of Ribonuclease PH from Clostridium perfringens (strain ATCC 13124 / DSM 756 / JCM 1290 / NCIMB 6125 / NCTC 8237 / Type A).